We begin with the raw amino-acid sequence, 300 residues long: Epimerase family protein MW0731 (300 aa).

This sequence belongs to the NAD(P)-dependent epimerase/dehydratase family. SDR39U1 subfamily.

This chain is Epimerase family protein MW0731, found in Staphylococcus aureus (strain MW2).